Consider the following 365-residue polypeptide: 3-isopropylmalate dehydrogenase (365 aa).

Arginine 96, arginine 106, arginine 134, and aspartate 224 together coordinate substrate. Mg(2+)-binding residues include aspartate 224, aspartate 248, and aspartate 252. 288–300 (GSAPTIAKQNIAN) provides a ligand contact to NAD(+).

The protein belongs to the isocitrate and isopropylmalate dehydrogenases family. LeuB type 1 subfamily. In terms of assembly, homodimer. Requires Mg(2+) as cofactor. It depends on Mn(2+) as a cofactor.

It localises to the cytoplasm. The catalysed reaction is (2R,3S)-3-isopropylmalate + NAD(+) = 4-methyl-2-oxopentanoate + CO2 + NADH. It participates in amino-acid biosynthesis; L-leucine biosynthesis; L-leucine from 3-methyl-2-oxobutanoate: step 3/4. Catalyzes the oxidation of 3-carboxy-2-hydroxy-4-methylpentanoate (3-isopropylmalate) to 3-carboxy-4-methyl-2-oxopentanoate. The product decarboxylates to 4-methyl-2 oxopentanoate. The polypeptide is 3-isopropylmalate dehydrogenase (Dehalococcoides mccartyi (strain ATCC BAA-2266 / KCTC 15142 / 195) (Dehalococcoides ethenogenes (strain 195))).